Here is a 384-residue protein sequence, read N- to C-terminus: Chorismate synthase (384 aa).

The NADP(+) site is built by Arg40 and Arg46. Residues 127–129 (RTS), 247–248 (QA), Ala292, 307–311 (KPIPT), and Arg333 contribute to the FMN site.

It belongs to the chorismate synthase family. Homotetramer. Requires FMNH2 as cofactor.

The catalysed reaction is 5-O-(1-carboxyvinyl)-3-phosphoshikimate = chorismate + phosphate. Its pathway is metabolic intermediate biosynthesis; chorismate biosynthesis; chorismate from D-erythrose 4-phosphate and phosphoenolpyruvate: step 7/7. In terms of biological role, catalyzes the anti-1,4-elimination of the C-3 phosphate and the C-6 proR hydrogen from 5-enolpyruvylshikimate-3-phosphate (EPSP) to yield chorismate, which is the branch point compound that serves as the starting substrate for the three terminal pathways of aromatic amino acid biosynthesis. This reaction introduces a second double bond into the aromatic ring system. The protein is Chorismate synthase of Alkaliphilus oremlandii (strain OhILAs) (Clostridium oremlandii (strain OhILAs)).